We begin with the raw amino-acid sequence, 1088 residues long: uncharacterized protein (1088 aa).

Position 299 is a phosphoserine (S299). The disordered stretch occupies residues 954-980; the sequence is PRSSVATTASTESSEQGPKMKRMARRK. Residues 956–968 show a composition bias toward low complexity; that stretch reads SSVATTASTESSE. At S984 the chain carries Phosphoserine. At T1013 the chain carries Phosphothreonine. The disordered stretch occupies residues 1063–1088; the sequence is MKVTDKAKDEDIDPMDPMSPLNKDVS. S1081 is modified (phosphoserine).

This is an uncharacterized protein from Saccharomyces cerevisiae (strain ATCC 204508 / S288c) (Baker's yeast).